Consider the following 340-residue polypeptide: MSEDMEVTNWGYTHISVKEFCYVWTIRNFSPCIDGIRRTITSPVFSLEANDEVTWCLIAHPNGVDEVSECYMSVFLELLSCRKSPVWAKYEFWITTSQGEKYQCMKSFNVHSFQKNQYRGFKKFILGDFLISHPRRFLPENKLTLCCKVSIVGSVFGMPGQNITPAIKDPRHLLTDDLGELWENSLFTDCCLLVAGHEFRAHKAILAARSPVFRAMFEHEMEERLGNPTEIHDLDPKVFKEMMGFIYTGKAPHLQSHSMATDVLTAADKYGLEGLKVLCEDALCRNLSVENAAQTLILADLHKREQLKTQALYFIALHASVVSETSEWKSMMETHPHLVG.

Residues 19–149 (EFCYVWTIRN…ENKLTLCCKV (131 aa)) form the MATH domain. In terms of domain architecture, BTB spans 188–255 (TDCCLLVAGH…IYTGKAPHLQ (68 aa)).

Belongs to the Tdpoz family.

The sequence is that of TD and POZ domain-containing protein 5 from Mus musculus (Mouse).